The sequence spans 320 residues: Protease HtpX homolog (320 aa).

2 helical membrane passes run 6 to 26 and 28 to 48; these read TAML…LIGG and AGMM…YWNS. Residue His130 coordinates Zn(2+). Glu131 is a catalytic residue. Position 134 (His134) interacts with Zn(2+). 2 consecutive transmembrane segments (helical) span residues 145 to 165 and 173 to 193; these read ITAT…FFGG and PLGF…AMLV. Glu202 provides a ligand contact to Zn(2+). Positions 281–320 are disordered; that stretch reads GGMNVSTPPVRAANPSRKSRSVPDTGLGRGGSQPPKGPWS.

This sequence belongs to the peptidase M48B family. The cofactor is Zn(2+).

Its subcellular location is the cell inner membrane. This is Protease HtpX homolog from Rhizobium leguminosarum bv. trifolii (strain WSM2304).